Consider the following 244-residue polypeptide: Flavin-dependent thymidylate synthase (244 aa).

A ThyX domain is found at 7–199; sequence PRVFLIASWG…PNLARLVWED (193 aa). FAD contacts are provided by residues Ser60 and 83 to 85; that span reads RHR. Residues 80 to 83, 93 to 95, and Arg137 each bind dUMP; these read QFIR and SQR. The ThyX motif motif lies at 83–93; sequence RHRMASYWSES. Residues 153–155 and Asn160 each bind FAD; that span reads NAR. Arg165 is a binding site for dUMP. Arg165 acts as the Involved in ionization of N3 of dUMP, leading to its activation in catalysis.

It belongs to the thymidylate synthase ThyX family. In terms of assembly, homotetramer. It depends on FAD as a cofactor.

The enzyme catalyses dUMP + (6R)-5,10-methylene-5,6,7,8-tetrahydrofolate + NADPH + H(+) = dTMP + (6S)-5,6,7,8-tetrahydrofolate + NADP(+). It participates in pyrimidine metabolism; dTTP biosynthesis. In terms of biological role, catalyzes the reductive methylation of 2'-deoxyuridine-5'-monophosphate (dUMP) to 2'-deoxythymidine-5'-monophosphate (dTMP) while utilizing 5,10-methylenetetrahydrofolate (mTHF) as the methyl donor, and NADPH and FADH(2) as the reductant. The polypeptide is Flavin-dependent thymidylate synthase (Pyrobaculum aerophilum (strain ATCC 51768 / DSM 7523 / JCM 9630 / CIP 104966 / NBRC 100827 / IM2)).